Reading from the N-terminus, the 76-residue chain is Senegalin (76 aa).

The first 22 residues, 1–22, serve as a signal peptide directing secretion; the sequence is MLSLKKSMLLLFFLGMVSFSLA. The propeptide occupies 23–55; sequence NKRSDGKRADEEGEDKRADEEGEDKRADEEGED. Residues 24-54 form a disordered region; that stretch reads KRSDGKRADEEGEDKRADEEGEDKRADEEGE. Residue Leu75 is modified to Leucine amide.

Expressed by the skin glands.

The protein localises to the secreted. Its function is as follows. Antimicrobial peptide with activity against the Gram-positive bacterium S.aureus NCTC 10788 (MIC=50 um) and the yeast C.albicans NCPF 1467 (MIC=150 uM). Ineffective against the Gram-negative bacterium E.coli NCTC 10418. Induces a dose-dependent contraction of rat urinary bladder smooth muscle (EC50=2.9 nM) and a dose-dependent relaxation of rat tail artery smooth muscle (EC50=37.7 nM). The chain is Senegalin from Kassina senegalensis (Senegal running frog).